The chain runs to 1073 residues: Guanylyl cyclase C (1073 aa).

The signal sequence occupies residues 1–23; that stretch reads MKTLLLDLALWSLLFQPGWLSFS. Over 24–430 the chain is Extracellular; sequence SQVSQNCHNG…PNDITGRGPQ (407 aa). Asparagine 32, asparagine 75, asparagine 79, asparagine 195, asparagine 284, asparagine 307, asparagine 345, and asparagine 402 each carry an N-linked (GlcNAc...) asparagine glycan. The helical transmembrane segment at 431 to 454 threads the bilayer; sequence ILMIAVFTLTGAVVLLLLVALLML. Over 455–1073 the chain is Cytoplasmic; it reads RKYRKDYELR…NTTDKESTYF (619 aa). Residues 489–749 enclose the Protein kinase domain; the sequence is LKIDDDKRRD…KIETTLAKIF (261 aa). A Guanylate cyclase domain is found at 824-954; it reads TIYFSDIVGF…DTVNTASRME (131 aa).

It belongs to the adenylyl cyclase class-4/guanylyl cyclase family. As to quaternary structure, homotrimer. Interacts via its C-terminal region with NHERF4. Interacts with the lectin chaperone VIP36. In terms of processing, glycosylation at Asn-75 and/or Asn-79 is required for interaction with VIP36 while glycosylation at Asn-345 and Asn-402 modulates ligand-mediated GUCY2C activation.

The protein localises to the cell membrane. Its subcellular location is the endoplasmic reticulum membrane. It catalyses the reaction GTP = 3',5'-cyclic GMP + diphosphate. Guanylyl cyclase that catalyzes synthesis of cyclic GMP (cGMP) from GTP. Receptor for the E.coli heat-stable enterotoxin; E.coli enterotoxin markedly stimulates the accumulation of cGMP in mammalian cells expressing GUCY2C. Also activated by the endogenous peptides guanylin and uroguanylin. In Homo sapiens (Human), this protein is Guanylyl cyclase C.